A 173-amino-acid polypeptide reads, in one-letter code: Calcium-binding protein 5 (173 aa).

EF-hand domains follow at residues 28-63 (DEIE…MGYM), 82-99 (GRVD…KLLA), 105-140 (IGVQ…LLGD), and 142-173 (LTSQ…MMSR). D41, D43, D45, and D52 together coordinate Ca(2+). Ca(2+) is bound by residues D118, N120, D122, E124, E129, D155, N157, D159, T161, and E166.

As to quaternary structure, interacts with CACNA1C (via C-terminal CDB motif) in a calcium-dependent manner. Interacts with STXBP1. Interacts with MYO6. Expressed in the retina (at protein level).

Its subcellular location is the cytoplasm. In terms of biological role, inhibits calcium-dependent inactivation of L-type calcium channel and shifts voltage dependence of activation to more depolarized membrane potentials. Involved in the transmission of light signals. May positively regulate neurotransmitter vesicle endocytosis and exocytosis in a salt-dependent manner. May play a role in the extension and network organization of neurites. In Bos taurus (Bovine), this protein is Calcium-binding protein 5 (CABP5).